Consider the following 323-residue polypeptide: tRNA U34 carboxymethyltransferase (323 aa).

Carboxy-S-adenosyl-L-methionine is bound by residues Lys-91, Trp-105, Lys-110, Gly-130, 181-182, Met-196, Tyr-200, and Arg-315; that span reads IE.

It belongs to the class I-like SAM-binding methyltransferase superfamily. CmoB family. Homotetramer.

It carries out the reaction carboxy-S-adenosyl-L-methionine + 5-hydroxyuridine(34) in tRNA = 5-carboxymethoxyuridine(34) in tRNA + S-adenosyl-L-homocysteine + H(+). Functionally, catalyzes carboxymethyl transfer from carboxy-S-adenosyl-L-methionine (Cx-SAM) to 5-hydroxyuridine (ho5U) to form 5-carboxymethoxyuridine (cmo5U) at position 34 in tRNAs. This Yersinia pseudotuberculosis serotype O:3 (strain YPIII) protein is tRNA U34 carboxymethyltransferase.